The following is a 117-amino-acid chain: Large ribosomal subunit protein bL19 (117 aa).

Belongs to the bacterial ribosomal protein bL19 family.

Its function is as follows. This protein is located at the 30S-50S ribosomal subunit interface and may play a role in the structure and function of the aminoacyl-tRNA binding site. The polypeptide is Large ribosomal subunit protein bL19 (Vesicomyosocius okutanii subsp. Calyptogena okutanii (strain HA)).